Here is a 324-residue protein sequence, read N- to C-terminus: Delta-aminolevulinic acid dehydratase (324 aa).

Residues Cys120, Cys122, and Cys130 each coordinate Zn(2+). The active-site Schiff-base intermediate with substrate is the Lys195. Positions 205 and 217 each coordinate 5-aminolevulinate. Glu233 is a Mg(2+) binding site. Catalysis depends on Lys248, which acts as the Schiff-base intermediate with substrate. 5-aminolevulinate-binding residues include Ser274 and Tyr313.

The protein belongs to the ALAD family. As to quaternary structure, homooctamer. It depends on Zn(2+) as a cofactor.

It carries out the reaction 2 5-aminolevulinate = porphobilinogen + 2 H2O + H(+). It functions in the pathway porphyrin-containing compound metabolism; protoporphyrin-IX biosynthesis; coproporphyrinogen-III from 5-aminolevulinate: step 1/4. In terms of biological role, catalyzes an early step in the biosynthesis of tetrapyrroles. Binds two molecules of 5-aminolevulinate per subunit, each at a distinct site, and catalyzes their condensation to form porphobilinogen. The chain is Delta-aminolevulinic acid dehydratase (hemB) from Bacillus subtilis (strain 168).